Consider the following 350-residue polypeptide: Ferredoxin--NADP reductase (350 aa).

The FAD site is built by D49, Q57, Y62, V102, F136, D303, and T344.

This sequence belongs to the ferredoxin--NADP reductase type 2 family. In terms of assembly, homodimer. It depends on FAD as a cofactor.

It carries out the reaction 2 reduced [2Fe-2S]-[ferredoxin] + NADP(+) + H(+) = 2 oxidized [2Fe-2S]-[ferredoxin] + NADPH. The protein is Ferredoxin--NADP reductase of Granulibacter bethesdensis (strain ATCC BAA-1260 / CGDNIH1).